The following is a 225-amino-acid chain: NAD(P)H-quinone oxidoreductase subunit K, chloroplastic (225 aa).

[4Fe-4S] cluster is bound by residues C43, C44, C108, and C139.

This sequence belongs to the complex I 20 kDa subunit family. As to quaternary structure, NDH is composed of at least 16 different subunits, 5 of which are encoded in the nucleus. Requires [4Fe-4S] cluster as cofactor.

It is found in the plastid. The protein localises to the chloroplast thylakoid membrane. The catalysed reaction is a plastoquinone + NADH + (n+1) H(+)(in) = a plastoquinol + NAD(+) + n H(+)(out). The enzyme catalyses a plastoquinone + NADPH + (n+1) H(+)(in) = a plastoquinol + NADP(+) + n H(+)(out). Its function is as follows. NDH shuttles electrons from NAD(P)H:plastoquinone, via FMN and iron-sulfur (Fe-S) centers, to quinones in the photosynthetic chain and possibly in a chloroplast respiratory chain. The immediate electron acceptor for the enzyme in this species is believed to be plastoquinone. Couples the redox reaction to proton translocation, and thus conserves the redox energy in a proton gradient. The protein is NAD(P)H-quinone oxidoreductase subunit K, chloroplastic of Carica papaya (Papaya).